The sequence spans 1117 residues: Telomerase reverse transcriptase (1117 aa).

A TEN region spans residues 1-191 (MQKINNINNN…VKQKKWYKNN (191 aa)). Positions 217–519 (NQYIYPEIQR…ENLEKVEEKL (303 aa)) are RBD. Residues 517–881 (EKLIPEDSFQ…NECQWIGKSI (365 aa)) form the Reverse transcriptase domain. The segment at 520-887 (IPEDSFQKYP…GKSIDMNTLE (368 aa)) is RT. Aspartate 618 contributes to the Mg(2+) binding site. The interval 638 to 742 (SDLIQDTYFI…NQDKPRCITK (105 aa)) is TRAP. Residues aspartate 815 and aspartate 816 each coordinate Mg(2+). The interval 888-1117 (IKSIQKQTQQ…SAKSNQQNTN (230 aa)) is CTE.

It belongs to the reverse transcriptase family. Telomerase subfamily. In terms of assembly, component of the telomerase holoenzyme complex, composed of the catalytic core (the catalytic subunit TERT, the telomerase RNA template component TER and TAP65/p65), which is associated with two heterotrimeric subcomplexes: (i) the replication protein A (RPA)-related subcomplex, composed of TEB1, RPA2/TEB2 and RPA3/TEB3 and (ii) the CST-like subcomplex, composed of TAP75/p75, TAP45/p45 and TAP19/p19. TEB1 and the CST-like subcomplex are tethered to the catalytic core by TAP50/p50.

Its subcellular location is the nucleus. It localises to the chromosome. The protein resides in the telomere. It catalyses the reaction DNA(n) + a 2'-deoxyribonucleoside 5'-triphosphate = DNA(n+1) + diphosphate. Catalytic component of telomerase, an essential ribonucleoprotein enzyme that copies new telomeric repeats onto chromosome ends by repetitively synthesizing the short telomere-repeat sequence 5'-TTGGGG-3' using an RNA template component TER. TERT is a reverse transcriptase that adds simple sequence repeats to chromosome ends by copying a template sequence within the RNA component of the enzyme. The polypeptide is Telomerase reverse transcriptase (Tetrahymena thermophila (strain SB210)).